An 812-amino-acid chain; its full sequence is Collagen-like protein 5 (812 aa).

N-linked (GlcNAc...) asparagine; by host glycosylation is found at Asn-13 and Asn-83. 3 Collagen-like domains span residues Gly-69–Asp-128, Gly-143–Asn-502, and Gly-506–Ala-565. Positions Ser-71 to Asn-568 are disordered. 4 stretches are compositionally biased toward basic and acidic residues: residues Thr-88 to Asp-112, Ser-121 to Ser-435, Ser-444 to Lys-523, and Val-531 to Ile-561. N-linked (GlcNAc...) asparagine; by host glycosylation occurs at Asn-502. N-linked (GlcNAc...) asparagine; by host glycans are attached at residues Asn-637, Asn-658, and Asn-667. Residues Gly-730–Asp-802 are disordered. Over residues Phe-752 to Gly-765 the composition is skewed to gly residues.

May be hydroxylated on lysine by the viral-encoded procollagen-lysine,2-oxoglutarate 5-dioxygenase.

It localises to the virion. Functionally, may participate in the formation of a layer of cross-linked glycosylated fibrils at the viral surface thus giving it a hairy-like appearance. The chain is Collagen-like protein 5 from Acanthamoeba polyphaga (Amoeba).